Here is a 543-residue protein sequence, read N- to C-terminus: Putative cysteine ligase BshC (543 aa).

Positions 419-440 (DEKNNDNIDEVVEEVKAQISDI) form a coiled coil.

It belongs to the BshC family.

Involved in bacillithiol (BSH) biosynthesis. May catalyze the last step of the pathway, the addition of cysteine to glucosamine malate (GlcN-Mal) to generate BSH. The polypeptide is Putative cysteine ligase BshC (Oceanobacillus iheyensis (strain DSM 14371 / CIP 107618 / JCM 11309 / KCTC 3954 / HTE831)).